A 712-amino-acid polypeptide reads, in one-letter code: Cyclolysin secretion/processing ATP-binding protein CyaB (712 aa).

The Peptidase C39 domain maps to 7 to 128 (QCASVPDSGL…ALWAGELLLC (122 aa)). The region spanning 157–439 (IGEVLLISLV…LAQLWNDFQQ (283 aa)) is the ABC transmembrane type-1 domain. A run of 6 helical transmembrane segments spans residues 160-180 (VLLI…FFQV), 194-214 (LNVI…LTGI), 272-292 (AVTV…MFFY), 298-318 (LVVL…TPVL), 367-387 (VAAG…VTLI), and 390-410 (LVAL…RMTV). The region spanning 471 to 706 (IELDRVSFRY…GGLYARLQAL (236 aa)) is the ABC transporter domain. 505–512 (GRSGSGKS) lines the ATP pocket.

It belongs to the ABC transporter superfamily. Cyclolysin exporter (TC 3.A.1.109.2) family.

It is found in the cell membrane. Its function is as follows. Involved in the export of calmodulin-sensitive adenylate cyclase-hemolysin (cyclolysin). The chain is Cyclolysin secretion/processing ATP-binding protein CyaB (cyaB) from Bordetella pertussis (strain ATCC 9797 / DSM 5571 / CCUG 30873 / LMG 14455 / NCTC 10739 / 18323).